The following is an 89-amino-acid chain: Phosphocarrier protein HPr (89 aa).

The HPr domain maps to methionine 1–aspartate 88. The active-site Pros-phosphohistidine intermediate is histidine 15. Serine 46 carries the post-translational modification Phosphoserine; by HPrK/P.

It belongs to the HPr family.

The protein resides in the cytoplasm. Its activity is regulated as follows. Phosphorylation on Ser-46 inhibits the phosphoryl transfer from enzyme I to HPr. Functionally, general (non sugar-specific) component of the phosphoenolpyruvate-dependent sugar phosphotransferase system (sugar PTS). This major carbohydrate active-transport system catalyzes the phosphorylation of incoming sugar substrates concomitantly with their translocation across the cell membrane. The phosphoryl group from phosphoenolpyruvate (PEP) is transferred to the phosphoryl carrier protein HPr by enzyme I. Phospho-HPr then transfers it to the PTS EIIA domain. The chain is Phosphocarrier protein HPr (ptsH) from Xylella fastidiosa (strain 9a5c).